The following is a 390-amino-acid chain: Precorrin-6Y C(5,15)-methyltransferase [decarboxylating] (390 aa).

The protein belongs to the precorrin methyltransferase family.

It catalyses the reaction precorrin-6B + 2 S-adenosyl-L-methionine = precorrin-8X + 2 S-adenosyl-L-homocysteine + CO2 + 3 H(+). The protein operates within cofactor biosynthesis; adenosylcobalamin biosynthesis; cob(II)yrinate a,c-diamide from precorrin-2 (aerobic route): step 7/10. Functionally, catalyzes the methylation of both C-5 and C-15 in precorrin-6Y to form precorrin-8X. This chain is Precorrin-6Y C(5,15)-methyltransferase [decarboxylating] (cobL), found in Mycobacterium tuberculosis (strain CDC 1551 / Oshkosh).